Reading from the N-terminus, the 558-residue chain is Formate--tetrahydrofolate ligase 2 (558 aa).

67–74 (TPAGEGKT) is a binding site for ATP.

Belongs to the formate--tetrahydrofolate ligase family.

The enzyme catalyses (6S)-5,6,7,8-tetrahydrofolate + formate + ATP = (6R)-10-formyltetrahydrofolate + ADP + phosphate. The protein operates within one-carbon metabolism; tetrahydrofolate interconversion. The sequence is that of Formate--tetrahydrofolate ligase 2 from Desulfitobacterium hafniense (strain Y51).